Here is a 608-residue protein sequence, read N- to C-terminus: Albumin (608 aa).

An N-terminal signal peptide occupies residues 1–18 (MKWVTFISLLFLFSSAYS). Positions 19–24 (RGVFRR) are excised as a propeptide. 3 Albumin domains span residues 19 to 210 (RGVF…DALE), 211 to 403 (GKSL…EFQP), and 404 to 601 (LVDE…KLVE). H27 is a Cu cation binding site. S29 is subject to Phosphoserine. Ca(2+) contacts are provided by E30 and D37. Cysteines 77 and 86 form a disulfide. A phosphoserine mark is found at S82 and S89. H91 is a Zn(2+) binding site. 6 disulfide bridges follow: C99–C115, C114–C125, C148–C193, C192–C201, C224–C270, and C269–C277. T107 carries the post-translational modification Phosphothreonine. An N6-succinyllysine modification is found at K229. E268 contacts Ca(2+). Zn(2+)-binding residues include H271 and D273. Ca(2+) is bound by residues D273, E276, D279, and D283. Disulfide bonds link C289–C303, C302–C313, C340–C385, C384–C393, C416–C462, C461–C472, C485–C501, and C500–C511. Phosphoserine is present on S297. The residue at position 443 (S443) is a Phosphoserine. Residues T444 and T446 each carry the phosphothreonine modification. N6-succinyllysine is present on K460. Residue S513 is modified to Phosphoserine. 2 disulfides stabilise this stretch: C538–C583 and C582–C591. Residue K558 is modified to N6-methyllysine. T570 is subject to Phosphothreonine. An N6-succinyllysine modification is found at K588.

The protein belongs to the ALB/AFP/VDB family. As to quaternary structure, interacts with FCGRT; this interaction regulates ALB homeostasis. Interacts with TASOR. In plasma, occurs in a covalently-linked complex with chromophore-bound alpha-1-microglobulin; this interaction does not prevent fatty acid binding to ALB. Phosphorylated by FAM20C in the extracellular medium. In terms of tissue distribution, plasma.

The protein resides in the secreted. Binds water, Ca(2+), Na(+), K(+), fatty acids, hormones, bilirubin and drugs. Its main function is the regulation of the colloidal osmotic pressure of blood. Major zinc transporter in plasma, typically binds about 80% of all plasma zinc. Major calcium and magnesium transporter in plasma, binds approximately 45% of circulating calcium and magnesium in plasma. Potentially has more than two calcium-binding sites and might additionally bind calcium in a non-specific manner. The shared binding site between zinc and calcium at residue Asp-273 suggests a crosstalk between zinc and calcium transport in the blood. The rank order of affinity is zinc &gt; calcium &gt; magnesium. Binds to the bacterial siderophore enterobactin and inhibits enterobactin-mediated iron uptake of E.coli from ferric transferrin, and may thereby limit the utilization of iron and growth of enteric bacteria such as E.coli. Does not prevent iron uptake by the bacterial siderophore aerobactin. This Oryctolagus cuniculus (Rabbit) protein is Albumin (ALB).